The primary structure comprises 212 residues: 3-oxo-tetronate 4-phosphate decarboxylase (212 aa).

Glutamate 79 serves as the catalytic Proton acceptor. 3 residues coordinate Zn(2+): glutamate 79, histidine 98, and histidine 100. The active-site Proton donor is the tyrosine 125. Histidine 165 is a Zn(2+) binding site.

The protein belongs to the aldolase class II family. AraD/FucA subfamily. Zn(2+) serves as cofactor.

It carries out the reaction 3-dehydro-4-O-phospho-D-erythronate + H(+) = dihydroxyacetone phosphate + CO2. It catalyses the reaction 3-dehydro-4-O-phospho-L-erythronate + H(+) = dihydroxyacetone phosphate + CO2. Its function is as follows. Catalyzes the decarboxylation of 3-oxo-tetronate 4-phosphate to dihydroxyacetone phosphate (DHAP) and CO(2). The sequence is that of 3-oxo-tetronate 4-phosphate decarboxylase from Escherichia coli O6:H1 (strain CFT073 / ATCC 700928 / UPEC).